The sequence spans 427 residues: Branched-chain-amino-acid aminotransferase, mitochondrial (427 aa).

A mitochondrion-targeting transit peptide spans 1–47; it reads MSLMFLRRAGNIKGRNIRFALQRGSVGYSQQSSEACKNFLNTTQLRT. Lys-256 is subject to N6-(pyridoxal phosphate)lysine.

The protein belongs to the class-IV pyridoxal-phosphate-dependent aminotransferase family. Pyridoxal 5'-phosphate is required as a cofactor.

It localises to the mitochondrion. The protein resides in the nucleus. Its subcellular location is the cytoplasm. It carries out the reaction L-leucine + 2-oxoglutarate = 4-methyl-2-oxopentanoate + L-glutamate. The enzyme catalyses L-isoleucine + 2-oxoglutarate = (S)-3-methyl-2-oxopentanoate + L-glutamate. The catalysed reaction is L-valine + 2-oxoglutarate = 3-methyl-2-oxobutanoate + L-glutamate. Catalyzes the first reaction in the catabolism of the essential branched chain amino acids leucine, isoleucine, and valine. This is Branched-chain-amino-acid aminotransferase, mitochondrial (eca39) from Schizosaccharomyces pombe (strain 972 / ATCC 24843) (Fission yeast).